The chain runs to 156 residues: Large ribosomal subunit protein uL15 (156 aa).

Residues 1–13 (MKLNEIKDNEGAT) show a composition bias toward basic and acidic residues. The segment at 1–39 (MKLNEIKDNEGATKNRKRLGRGIGSGSGKTAGRGVKGQK) is disordered. The span at 21 to 35 (RGIGSGSGKTAGRGV) shows a compositional bias: gly residues.

It belongs to the universal ribosomal protein uL15 family. Part of the 50S ribosomal subunit.

Binds to the 23S rRNA. The sequence is that of Large ribosomal subunit protein uL15 from Rhizobium meliloti (strain 1021) (Ensifer meliloti).